We begin with the raw amino-acid sequence, 386 residues long: S-adenosylmethionine synthase (386 aa).

Residue His-16 coordinates ATP. Asp-18 provides a ligand contact to Mg(2+). Glu-44 provides a ligand contact to K(+). L-methionine-binding residues include Glu-57 and Gln-100. Residues 100 to 110 (QSRDIAQGVDR) form a flexible loop region. ATP is bound by residues 165 to 167 (DAK), Asp-240, 246 to 247 (RK), Ala-263, and Lys-267. L-methionine is bound at residue Asp-240. Lys-271 contributes to the L-methionine binding site.

This sequence belongs to the AdoMet synthase family. Homotetramer; dimer of dimers. Mg(2+) serves as cofactor. K(+) is required as a cofactor.

The protein resides in the cytoplasm. The enzyme catalyses L-methionine + ATP + H2O = S-adenosyl-L-methionine + phosphate + diphosphate. Its pathway is amino-acid biosynthesis; S-adenosyl-L-methionine biosynthesis; S-adenosyl-L-methionine from L-methionine: step 1/1. Catalyzes the formation of S-adenosylmethionine (AdoMet) from methionine and ATP. The overall synthetic reaction is composed of two sequential steps, AdoMet formation and the subsequent tripolyphosphate hydrolysis which occurs prior to release of AdoMet from the enzyme. The polypeptide is S-adenosylmethionine synthase (Francisella tularensis subsp. holarctica (strain FTNF002-00 / FTA)).